Consider the following 729-residue polypeptide: MLYKGDTLYLDWLEDGIAELVFDAPGSVNKLDTATVASLGHALDVLEKQSDLKGLLLRSEKAAFIVGADITEFLSLFLVPEEQLSQWLHFANSVFNRLEDLPVPTISAVNGYALGGGCECVLATDYRLATPDLRIGLPETKLGIMPGFGGSVRLPRLLGADSALEIIAAGKDVGADQALKIGLVDGVVAAEKLRDGALAILRQAMNGDLDWKAKRQPKLEPLKLSKIEAAMSFTIAKGMVAQTAGKHYPAPITAVKTIEAAARLGREEALVLENKSFVPLAHTNEARALVGIFLNDQYVKAKAKKLTKDVETPKHAAVLGAGIMGGGIAYQSAWKGVPVVMKDISDKSLTLGMTEAAKLLNKQLERGKIDGLKLAGVISTIQPTLEYSGFDRVDVVVEAVVENPKVKKAVLAETESKVRPDTVLASNTSTIPISELASVLQRPENFCGMHFFNPVHRMPLVEVIRGEKTSDNTIAKVVAWASKMGKTPIVVNDCPGFFVNRVLFPYFAGFSQLLRDGADFRKVDKVMEKQFGWPMGPAYLLDVVGIDTAHHAQAVMAAGFPQRMQKDYRDAIDALFDANRFGQKNGLGFWRYKDDSKGKPKKEEDAAVDSLLADVSQPKRDFSDEEIIARMMIPMVNEVVRCLEEGIIASPAEADMALVYGLGFPPFHGGAFRWLDTIGSAKYLDMAQQYQHLGPLYEVPAGLRDKARHNEAYYPQVEPARPVGALKTA.

The interval 1-189 (MLYKGDTLYL…KIGLVDGVVA (189 aa)) is enoyl-CoA hydratase/isomerase. Position 296 (D296) interacts with substrate. A 3-hydroxyacyl-CoA dehydrogenase region spans residues 311-729 (ETPKHAAVLG…ARPVGALKTA (419 aa)). NAD(+)-binding positions include M324, D343, 400-402 (VVE), K407, and S429. H450 acts as the For 3-hydroxyacyl-CoA dehydrogenase activity in catalysis. N453 is an NAD(+) binding site. Residues N500 and Y660 each contribute to the substrate site.

In the N-terminal section; belongs to the enoyl-CoA hydratase/isomerase family. It in the C-terminal section; belongs to the 3-hydroxyacyl-CoA dehydrogenase family. In terms of assembly, heterotetramer of two alpha chains (FadB) and two beta chains (FadA).

The enzyme catalyses a (3S)-3-hydroxyacyl-CoA + NAD(+) = a 3-oxoacyl-CoA + NADH + H(+). It carries out the reaction a (3S)-3-hydroxyacyl-CoA = a (2E)-enoyl-CoA + H2O. The catalysed reaction is a 4-saturated-(3S)-3-hydroxyacyl-CoA = a (3E)-enoyl-CoA + H2O. It catalyses the reaction (3S)-3-hydroxybutanoyl-CoA = (3R)-3-hydroxybutanoyl-CoA. The enzyme catalyses a (3Z)-enoyl-CoA = a 4-saturated (2E)-enoyl-CoA. It carries out the reaction a (3E)-enoyl-CoA = a 4-saturated (2E)-enoyl-CoA. It participates in lipid metabolism; fatty acid beta-oxidation. In terms of biological role, involved in the aerobic and anaerobic degradation of long-chain fatty acids via beta-oxidation cycle. Catalyzes the formation of 3-oxoacyl-CoA from enoyl-CoA via L-3-hydroxyacyl-CoA. It can also use D-3-hydroxyacyl-CoA and cis-3-enoyl-CoA as substrate. The sequence is that of Fatty acid oxidation complex subunit alpha from Klebsiella pneumoniae subsp. pneumoniae (strain ATCC 700721 / MGH 78578).